The chain runs to 475 residues: Aspartyl/glutamyl-tRNA(Asn/Gln) amidotransferase subunit B (475 aa).

It belongs to the GatB/GatE family. GatB subfamily. As to quaternary structure, heterotrimer of A, B and C subunits.

The catalysed reaction is L-glutamyl-tRNA(Gln) + L-glutamine + ATP + H2O = L-glutaminyl-tRNA(Gln) + L-glutamate + ADP + phosphate + H(+). It carries out the reaction L-aspartyl-tRNA(Asn) + L-glutamine + ATP + H2O = L-asparaginyl-tRNA(Asn) + L-glutamate + ADP + phosphate + 2 H(+). In terms of biological role, allows the formation of correctly charged Asn-tRNA(Asn) or Gln-tRNA(Gln) through the transamidation of misacylated Asp-tRNA(Asn) or Glu-tRNA(Gln) in organisms which lack either or both of asparaginyl-tRNA or glutaminyl-tRNA synthetases. The reaction takes place in the presence of glutamine and ATP through an activated phospho-Asp-tRNA(Asn) or phospho-Glu-tRNA(Gln). The chain is Aspartyl/glutamyl-tRNA(Asn/Gln) amidotransferase subunit B from Bacillus cereus (strain ATCC 10987 / NRS 248).